Here is a 243-residue protein sequence, read N- to C-terminus: R-spondin-2 (243 aa).

The signal sequence occupies residues 1-21 (MQFQLFSFVLIILNCVDYSHC). Disulfide bonds link Cys40–Cys46, Cys43–Cys52, Cys55–Cys74, Cys78–Cys93, Cys96–Cys104, Cys101–Cys110, Cys113–Cys124, Cys128–Cys141, Cys145–Cys187, Cys156–Cys163, and Cys196–Cys203. The FU repeat unit spans residues 90–134 (MNRCSRCRIENCDSCFSRDFCIKCKSGFYSHKGQCFEECPEGFAP). The 61-residue stretch at 144–204 (GCEVGPWSEW…RCKMAMRHCP (61 aa)) folds into the TSP type-1 domain. A glycan (N-linked (GlcNAc...) asparagine) is linked at Asn160. The tract at residues 202–243 (HCPGGTRTTKKKDKKNKKKKKKLLERAQEQHSVVLATDRSSQ) is disordered. Residues 209-224 (TTKKKDKKNKKKKKKL) are compositionally biased toward basic residues.

The protein belongs to the R-spondin family. As to quaternary structure, binds heparin.

Its subcellular location is the secreted. Functionally, activator of the canonical Wnt signaling pathway by acting as a ligand for lgr4-6 receptors. Upon binding to lgr4-6 (lgr4, lgr5 or lgr6), lgr4-6 associate with phosphorylated lrp6 and frizzled receptors that are activated by extracellular Wnt receptors, triggering the canonical Wnt signaling pathway to increase expression of target genes. Acts both in the canonical. Wnt/beta-catenin-dependent pathway and in non-canonical Wnt signaling pathway. Activates neural markers and promotes muscle formation. Overexpression blocks activin, nodal and BMP4 signaling, suggesting that it may negatively regulate the TGF-beta pathway. During embryonic development, plays a crucial role in limb specification, amplifying the Wnt signaling pathway independently of LGR4-6 receptors, possibly by acting as a direct antagonistic ligand to RNF43 and ZNRF3, hence governing the number of limbs an embryo should form. This Xenopus tropicalis (Western clawed frog) protein is R-spondin-2 (rspo2).